Consider the following 531-residue polypeptide: Peptide chain release factor 3 (531 aa).

The region spanning Ala13–Lys282 is the tr-type G domain. Residues Ser22–Thr29, Asp90–His94, and Asn144–Asp147 each bind GTP.

Belongs to the TRAFAC class translation factor GTPase superfamily. Classic translation factor GTPase family. PrfC subfamily.

Its subcellular location is the cytoplasm. Increases the formation of ribosomal termination complexes and stimulates activities of RF-1 and RF-2. It binds guanine nucleotides and has strong preference for UGA stop codons. It may interact directly with the ribosome. The stimulation of RF-1 and RF-2 is significantly reduced by GTP and GDP, but not by GMP. The protein is Peptide chain release factor 3 of Psychrobacter cryohalolentis (strain ATCC BAA-1226 / DSM 17306 / VKM B-2378 / K5).